Consider the following 164-residue polypeptide: FMN reductase (NADH) RutF (164 aa).

The protein belongs to the non-flavoprotein flavin reductase family. RutF subfamily.

The enzyme catalyses FMNH2 + NAD(+) = FMN + NADH + 2 H(+). Its function is as follows. Catalyzes the reduction of FMN to FMNH2 which is used to reduce pyrimidine by RutA via the Rut pathway. The chain is FMN reductase (NADH) RutF from Klebsiella pneumoniae (strain 342).